A 317-amino-acid polypeptide reads, in one-letter code: Putative toluene-4-sulfonate monooxygenase system reductase subunit TsaB2 (317 aa).

The FAD-binding FR-type domain maps to Asp4–Ala106. Arg110–Lys220 lines the NAD(+) pocket. One can recognise a 2Fe-2S ferredoxin-type domain in the interval Phe232–Ile317. Positions 266, 271, and 274 each coordinate [2Fe-2S] cluster.

Monomer. Part of the p-toluenesulfonate methyl-monooxygenase complex TsaBM, comprising the reductase TsaB and the oxygenase TsaM. The cofactor is FMN.

In terms of biological role, involved in the toluene-4-sulfonate degradation pathway. The protein is Putative toluene-4-sulfonate monooxygenase system reductase subunit TsaB2 (tsaB2) of Comamonas testosteroni (Pseudomonas testosteroni).